Consider the following 203-residue polypeptide: Holliday junction branch migration complex subunit RuvA (203 aa).

Residues 1-64 (MIGRLRGIIL…EDAQLLYGFN (64 aa)) form a domain I region. A domain II region spans residues 65 to 142 (NKQERTLFKE…KGLHGDLFTP (78 aa)). The tract at residues 143 to 154 (AADLVLTSPAGP) is flexible linker. Positions 155 to 203 (TADDAEQEAVAALVALGYKPQEASRMVSKIARPDANSETLIREALRAAL) are domain III.

Belongs to the RuvA family. Homotetramer. Forms an RuvA(8)-RuvB(12)-Holliday junction (HJ) complex. HJ DNA is sandwiched between 2 RuvA tetramers; dsDNA enters through RuvA and exits via RuvB. An RuvB hexamer assembles on each DNA strand where it exits the tetramer. Each RuvB hexamer is contacted by two RuvA subunits (via domain III) on 2 adjacent RuvB subunits; this complex drives branch migration. In the full resolvosome a probable DNA-RuvA(4)-RuvB(12)-RuvC(2) complex forms which resolves the HJ.

The protein localises to the cytoplasm. Functionally, the RuvA-RuvB-RuvC complex processes Holliday junction (HJ) DNA during genetic recombination and DNA repair, while the RuvA-RuvB complex plays an important role in the rescue of blocked DNA replication forks via replication fork reversal (RFR). RuvA specifically binds to HJ cruciform DNA, conferring on it an open structure. The RuvB hexamer acts as an ATP-dependent pump, pulling dsDNA into and through the RuvAB complex. HJ branch migration allows RuvC to scan DNA until it finds its consensus sequence, where it cleaves and resolves the cruciform DNA. The protein is Holliday junction branch migration complex subunit RuvA of Klebsiella pneumoniae (strain 342).